A 715-amino-acid chain; its full sequence is Polyribonucleotide nucleotidyltransferase (715 aa).

Mg(2+) contacts are provided by Asp-493 and Asp-499. The 60-residue stretch at 560–619 (PRMITIKINPEKIRDVIGKGGSVIRALTEETGTTIDISDDGVVTIASTSSEGMAEAKKRI) folds into the KH domain. Residues 629 to 697 (GQVYEGTVLK…EKGRVRLSAK (69 aa)) form the S1 motif domain.

It belongs to the polyribonucleotide nucleotidyltransferase family. It depends on Mg(2+) as a cofactor.

It is found in the cytoplasm. The enzyme catalyses RNA(n+1) + phosphate = RNA(n) + a ribonucleoside 5'-diphosphate. Functionally, involved in mRNA degradation. Catalyzes the phosphorolysis of single-stranded polyribonucleotides processively in the 3'- to 5'-direction. In Burkholderia vietnamiensis (strain G4 / LMG 22486) (Burkholderia cepacia (strain R1808)), this protein is Polyribonucleotide nucleotidyltransferase.